The primary structure comprises 824 residues: Putative beta-glucuronidase (824 aa).

Residues 26-43 (YLKLVLVLYLIMVSWSGY) traverse the membrane as a helical segment. Catalysis depends on Glu-430, which acts as the Proton donor.

It belongs to the glycosyl hydrolase 2 family.

The protein resides in the membrane. It carries out the reaction a beta-D-glucuronoside + H2O = D-glucuronate + an alcohol. Glycoside hydrolase that may be involved in ulvan degradation. Ulvan is the main polysaccharide component of the Ulvales (green seaweed) cell wall. It is composed of disaccharide building blocks comprising 3-sulfated rhamnose (Rha3S) linked to D-glucuronic acid (GlcA), L-iduronic acid (IduA), or D-xylose (Xyl). The chain is Putative beta-glucuronidase from Formosa agariphila (strain DSM 15362 / KCTC 12365 / LMG 23005 / KMM 3901 / M-2Alg 35-1).